We begin with the raw amino-acid sequence, 350 residues long: MGKLLKPIKDVGIVGYGAYVPMYRIRNEEIGRVWGISNFPIEEKAVPGLDEDAITIGIEAARNALKRAKIDPKDIRAIWFGSESKPYAVKPSSTVIAEAIGATPDLEAADFEFACKAGTEALQAAIGFVASGMAKYAMAIGADTAQGRPGDHLEFTAGAGGAAFIIGEKSSETVAYFEGSYSYVTDTPDFWRRQHEHYPRHGNRFTGEPAYFHHVVTAAKTLMDELGLTPEDFDYAVFHQPNVKFPLVAARMLGIPKEKVLPGLLSGRIGNTYSGATMVGISAVLDIAKPGDRILWVSFGSGAGSDAFSIVVQDAIEEKRNLAPKVEDYIKRRKVIDYALYAKARRKYII.

The active-site Proton donor/acceptor is E83. Residue C115 is the Acyl-thioester intermediate of the active site. Residues C115 and T156 each contribute to the (3S)-3-hydroxy-3-methylglutaryl-CoA site. R204 is a binding site for CoA. Positions 206 and 239 each coordinate (3S)-3-hydroxy-3-methylglutaryl-CoA. H239 functions as the Proton donor/acceptor in the catalytic mechanism. K244 is a binding site for CoA. (3S)-3-hydroxy-3-methylglutaryl-CoA contacts are provided by N271 and S301.

It belongs to the thiolase-like superfamily. Archaeal HMG-CoA synthase family. As to quaternary structure, interacts with acetoacetyl-CoA thiolase that catalyzes the precedent step in the pathway and with a DUF35 protein. The acetoacetyl-CoA thiolase/HMG-CoA synthase complex channels the intermediate via a fused CoA-binding site, which allows for efficient coupling of the endergonic thiolase reaction with the exergonic HMGCS reaction.

It carries out the reaction acetoacetyl-CoA + acetyl-CoA + H2O = (3S)-3-hydroxy-3-methylglutaryl-CoA + CoA + H(+). Its pathway is metabolic intermediate biosynthesis; (R)-mevalonate biosynthesis; (R)-mevalonate from acetyl-CoA: step 2/3. Its function is as follows. Catalyzes the condensation of acetyl-CoA with acetoacetyl-CoA to form 3-hydroxy-3-methylglutaryl-CoA (HMG-CoA). Functions in the mevalonate (MVA) pathway leading to isopentenyl diphosphate (IPP), a key precursor for the biosynthesis of isoprenoid compounds that are building blocks of archaeal membrane lipids. The chain is Hydroxymethylglutaryl-CoA synthase from Pyrococcus horikoshii (strain ATCC 700860 / DSM 12428 / JCM 9974 / NBRC 100139 / OT-3).